Consider the following 502-residue polypeptide: ATP synthase subunit alpha (502 aa).

Positions 115 to 137 are disordered; it reads VDGLGPVETTETRPIESPAPGVM. 169 to 176 contacts ATP; the sequence is GDRQTGKT.

This sequence belongs to the ATPase alpha/beta chains family. As to quaternary structure, F-type ATPases have 2 components, CF(1) - the catalytic core - and CF(0) - the membrane proton channel. CF(1) has five subunits: alpha(3), beta(3), gamma(1), delta(1), epsilon(1). CF(0) has three main subunits: a(1), b(2) and c(9-12). The alpha and beta chains form an alternating ring which encloses part of the gamma chain. CF(1) is attached to CF(0) by a central stalk formed by the gamma and epsilon chains, while a peripheral stalk is formed by the delta and b chains.

It localises to the cell membrane. It carries out the reaction ATP + H2O + 4 H(+)(in) = ADP + phosphate + 5 H(+)(out). In terms of biological role, produces ATP from ADP in the presence of a proton gradient across the membrane. The alpha chain is a regulatory subunit. This Geobacillus stearothermophilus (Bacillus stearothermophilus) protein is ATP synthase subunit alpha.